Consider the following 624-residue polypeptide: DNA-directed RNA polymerase subunit gamma (624 aa).

The Zn(2+) site is built by C70, C72, C85, and C88. Mg(2+) is bound by residues D466, D468, and D470.

It belongs to the RNA polymerase beta' chain family. RpoC1 subfamily. As to quaternary structure, in cyanobacteria the RNAP catalytic core is composed of 2 alpha, 1 beta, 1 beta', 1 gamma and 1 omega subunit. When a sigma factor is associated with the core the holoenzyme is formed, which can initiate transcription. It depends on Mg(2+) as a cofactor. Requires Zn(2+) as cofactor.

The enzyme catalyses RNA(n) + a ribonucleoside 5'-triphosphate = RNA(n+1) + diphosphate. Functionally, DNA-dependent RNA polymerase catalyzes the transcription of DNA into RNA using the four ribonucleoside triphosphates as substrates. This chain is DNA-directed RNA polymerase subunit gamma, found in Synechococcus sp. (strain ATCC 27144 / PCC 6301 / SAUG 1402/1) (Anacystis nidulans).